Consider the following 913-residue polypeptide: DNA repair endonuclease XPF (913 aa).

The helicase-like stretch occupies residues 1–454 (MDRGISAVRK…EVWVNLRKGD (454 aa)). 2 leucine-zipper regions span residues 233–254 (LNACLKELKCHNPSLEVEDLSL) and 270–298 (LDPLWHQLGAKTKSLVQDLKILRTLLQYL). N6-acetyllysine is present on K289. Residues 453 to 476 (GDGPKRTMKSDKRPKDTKNKERAS) are compositionally biased toward basic and acidic residues. Disordered stretches follow at residues 453–525 (GDGP…CGGE) and 638–677 (VVPEEREGRDETNLDLARGTVSTDAPADTRKAGGQEHNGT). The Nuclear localization signal motif lies at 483–488 (KRKKRE). A compositionally biased stretch (acidic residues) spans 500-509 (EPPEEGAAEE). S518 is subject to Phosphoserine. The segment covering 638-649 (VVPEEREGRDET) has biased composition (basic and acidic residues). The segment at 655–810 (RGTVSTDAPA…PSPHATAELF (156 aa)) is nuclease. The ERCC4 domain occupies 680 to 760 (SIVVDMREFR…RPVLLIEFDA (81 aa)). The hhH2, dimerization with ERCC1 stretch occupies residues 834-902 (TLPESDKYNP…QLYDFLHTAY (69 aa)).

The protein belongs to the XPF family. Heterodimer composed of ERCC1 and ERCC4/XPF. Interacts with SLX4/BTBD12; this interaction is direct and links the ERCC1-ERCC4/XPF complex to SLX4, which may coordinate the action of the structure-specific endonuclease during DNA repair. Mg(2+) is required as a cofactor.

The protein localises to the nucleus. It is found in the chromosome. Functionally, catalytic component of a structure-specific DNA repair endonuclease responsible for the 5-prime incision during DNA repair, and which is essential for nucleotide excision repair (NER) and interstrand cross-link (ICL) repair. The chain is DNA repair endonuclease XPF from Cricetulus griseus (Chinese hamster).